Reading from the N-terminus, the 390-residue chain is GTPase Obg (390 aa).

The Obg domain maps to 1-159; that stretch reads MKFVDEATIL…RELMLELLLL (159 aa). Positions 160–333 constitute an OBG-type G domain; it reads ADVGMLGLPN…LCWDVMNFLN (174 aa). GTP-binding positions include 166–173, 191–195, 213–216, 283–286, and 314–316; these read GLPNAGKS, FTTLI, DIPG, NKID, and SAA. The Mg(2+) site is built by S173 and T193. The segment covering 363–384 has biased composition (acidic residues); sequence EVEAEAESEDDDDWDEEDDDGV. The interval 363-390 is disordered; sequence EVEAEAESEDDDDWDEEDDDGVEFIYER.

The protein belongs to the TRAFAC class OBG-HflX-like GTPase superfamily. OBG GTPase family. In terms of assembly, monomer. Mg(2+) is required as a cofactor.

It localises to the cytoplasm. In terms of biological role, an essential GTPase which binds GTP, GDP and possibly (p)ppGpp with moderate affinity, with high nucleotide exchange rates and a fairly low GTP hydrolysis rate. Plays a role in control of the cell cycle, stress response, ribosome biogenesis and in those bacteria that undergo differentiation, in morphogenesis control. This chain is GTPase Obg, found in Yersinia enterocolitica serotype O:8 / biotype 1B (strain NCTC 13174 / 8081).